A 471-amino-acid polypeptide reads, in one-letter code: MSQIVTRFAPSPTGFLHIGGARTALFNWLYAKAKGGKMLLRIEDTDRQRSTKEAIDAILEGLTWLGIDWDGDVIYQFARAERHRQAVEEMLSRGNAYPCYATPEELDEMRELARKEGRPPRYDGRWRDRPASERPTDRKPVIRLRAPQEGVTVIEDQVQGTVTFPNKDLDDLVLLRSDGTPTYMLAVVVDDHDMGVTNIIRGDDHLTNAARQTQIYNALGWDVPRMAHIPLIHGPDGAKLSKRHGALGVDAYRDMGYLPAALRNYLVRLGWSHGDQEIFSTEEMVEHFDLDRVGRSAARFDFQKLENINGHYMRASSNAELFDAVMGLIPHLPDAEHRLARLTDARMEQLRAALPGLKERAKTLTELLDGAEFIFATRPLLLEEKAQAVLTAEARAHIAAMIPQLEAADWSAAGTETVVRAYAEQAGVKLGAVAQPLRAALTGRTTSPPVFDVFAVLGREESLARLKDQTA.

A 'HIGH' region motif is present at residues 10 to 20 (PSPTGFLHIGG). Residues 117 to 137 (GRPPRYDGRWRDRPASERPTD) form a disordered region. Positions 239–243 (KLSKR) match the 'KMSKS' region motif. K242 lines the ATP pocket.

This sequence belongs to the class-I aminoacyl-tRNA synthetase family. Glutamate--tRNA ligase type 1 subfamily. As to quaternary structure, monomer.

It is found in the cytoplasm. It carries out the reaction tRNA(Glu) + L-glutamate + ATP = L-glutamyl-tRNA(Glu) + AMP + diphosphate. Functionally, catalyzes the attachment of glutamate to tRNA(Glu) in a two-step reaction: glutamate is first activated by ATP to form Glu-AMP and then transferred to the acceptor end of tRNA(Glu). The chain is Glutamate--tRNA ligase from Azorhizobium caulinodans (strain ATCC 43989 / DSM 5975 / JCM 20966 / LMG 6465 / NBRC 14845 / NCIMB 13405 / ORS 571).